The following is a 277-amino-acid chain: Putative thiosulfate sulfurtransferase (277 aa).

2 consecutive Rhodanese domains span residues 18–125 (DSAN…PLST) and 154–274 (SIKI…VPIE). Catalysis depends on C233, which acts as the Cysteine persulfide intermediate. R238 is a binding site for substrate.

The enzyme catalyses thiosulfate + hydrogen cyanide = thiocyanate + sulfite + 2 H(+). In terms of biological role, may be a sulfotransferase involved in the formation of thiosulfate. This is Putative thiosulfate sulfurtransferase (cysA) from Mycobacterium leprae (strain TN).